Consider the following 401-residue polypeptide: Multidrug resistance protein MdtH (401 aa).

Transmembrane regions (helical) follow at residues 13–33, 34–54, 78–95, 99–116, 139–159, 165–185, 214–234, 243–263, 289–309, 340–360, and 365–385; these read YFLL…FPLI, SIHF…ALGL, MIVT…FIAL, PWIL…GTLF, LLLM…SWLL, FVCW…ALFL, VLTL…FPII, AAVK…LYPI, FPVG…LFYL, LGLA…YDTG, and IPQL…YALH.

It belongs to the major facilitator superfamily. DHA1 family. MdtH (TC 2.A.1.2.21) subfamily.

It is found in the cell inner membrane. In Photorhabdus laumondii subsp. laumondii (strain DSM 15139 / CIP 105565 / TT01) (Photorhabdus luminescens subsp. laumondii), this protein is Multidrug resistance protein MdtH.